A 770-amino-acid polypeptide reads, in one-letter code: Transducin-like enhancer protein 1 (770 aa).

Positions M1 to Q131 are q domain. Disordered regions lie at residues L128 to P157 and H176 to D348. Residues H132 to S199 form a GP domain region. Basic and acidic residues-rich tracts occupy residues A178–P196 and R209–D246. The interval N200–P268 is ccN domain. The Nuclear localization signal signature appears at K225–K228. S239 is subject to Phosphoserine. Residues P257 to H266 are compositionally biased toward low complexity. 3 positions are modified to phosphoserine; by CDK1: S259, S263, and S267. The segment covering S267 to A283 has biased composition (basic and acidic residues). Residues R269 to V450 form an SP domain region. Positions S284–S298 are enriched in low complexity. Position 286 is a phosphoserine (S286). Basic and acidic residues predominate over residues K300–A310. WD repeat units follow at residues G470–T501, N528–D558, S572–D602, G614–D644, L696–R726, and K737–E767.

This sequence belongs to the WD repeat Groucho/TLE family. Homooligomer and heterooligomer with other family members. Binds RUNX1, RUNX3, FOXA2, KDM6A, UTY, histone H3, HESX1, ESRRG and the NF-kappa-B subunit RELA. Interacts with HES1 (via WRPW motif). Binds TCF7, LEF1, TCF7L1 and TCF7L2. Interacts with SIX3. Interacts with EFNB1. Interacts with TLE4. Interacts with FOXG1/BF-1; the interaction is inhibited by TLE6/GRG6. In terms of processing, phosphorylated, probably by CDK1. The degree of phosphorylation varies throughout the cell cycle, and is highest at the G2/M transition. Becomes hyperphosphorylated in response to cell differentiation and interaction with HES1 or RUNX1. Ubiquitinated by XIAP/BIRC4. In all tissues examined, mostly in brain, liver and muscle.

The protein localises to the nucleus. Its function is as follows. Transcriptional corepressor that binds to a number of transcription factors. Inhibits NF-kappa-B-regulated gene expression. Inhibits the transcriptional activation mediated by FOXA2, and by CTNNB1 and TCF family members in Wnt signaling. Enhances FOXG1/BF-1- and HES1-mediated transcriptional repression. The effects of full-length TLE family members may be modulated by association with dominant-negative AES. Unusual function as coactivator for ESRRG. In Homo sapiens (Human), this protein is Transducin-like enhancer protein 1 (TLE1).